The chain runs to 355 residues: Peptide chain release factor 1 (355 aa).

Gln232 carries the N5-methylglutamine modification.

It belongs to the prokaryotic/mitochondrial release factor family. In terms of processing, methylated by PrmC. Methylation increases the termination efficiency of RF1.

It localises to the cytoplasm. Peptide chain release factor 1 directs the termination of translation in response to the peptide chain termination codons UAG and UAA. This Kineococcus radiotolerans (strain ATCC BAA-149 / DSM 14245 / SRS30216) protein is Peptide chain release factor 1.